A 472-amino-acid polypeptide reads, in one-letter code: Glutamate--tRNA ligase (472 aa).

The 'HIGH' region motif lies at 9–19 (PSPTGYLHVGG). Residues cysteine 98, cysteine 100, cysteine 125, and histidine 127 each coordinate Zn(2+). Positions 237 to 241 (KLSKR) match the 'KMSKS' region motif. Residue lysine 240 participates in ATP binding.

Belongs to the class-I aminoacyl-tRNA synthetase family. Glutamate--tRNA ligase type 1 subfamily. In terms of assembly, monomer. Zn(2+) is required as a cofactor.

The protein resides in the cytoplasm. The enzyme catalyses tRNA(Glu) + L-glutamate + ATP = L-glutamyl-tRNA(Glu) + AMP + diphosphate. Functionally, catalyzes the attachment of glutamate to tRNA(Glu) in a two-step reaction: glutamate is first activated by ATP to form Glu-AMP and then transferred to the acceptor end of tRNA(Glu). This is Glutamate--tRNA ligase from Klebsiella pneumoniae subsp. pneumoniae (strain ATCC 700721 / MGH 78578).